Here is a 288-residue protein sequence, read N- to C-terminus: ATP phosphoribosyltransferase (288 aa).

This sequence belongs to the ATP phosphoribosyltransferase family. Long subfamily. Mg(2+) serves as cofactor.

The protein localises to the cytoplasm. The catalysed reaction is 1-(5-phospho-beta-D-ribosyl)-ATP + diphosphate = 5-phospho-alpha-D-ribose 1-diphosphate + ATP. Its pathway is amino-acid biosynthesis; L-histidine biosynthesis; L-histidine from 5-phospho-alpha-D-ribose 1-diphosphate: step 1/9. With respect to regulation, feedback inhibited by histidine. Functionally, catalyzes the condensation of ATP and 5-phosphoribose 1-diphosphate to form N'-(5'-phosphoribosyl)-ATP (PR-ATP). Has a crucial role in the pathway because the rate of histidine biosynthesis seems to be controlled primarily by regulation of HisG enzymatic activity. The chain is ATP phosphoribosyltransferase from Methanococcus maripaludis (strain C5 / ATCC BAA-1333).